The primary structure comprises 37 residues: U4-theraphotoxin-Hhn1v (37 aa).

3 cysteine pairs are disulfide-bonded: C3–C17, C7–C28, and C22–C33.

The protein belongs to the neurotoxin 12 (Hwtx-2) family. 02 (Hwtx-2) subfamily. In terms of tissue distribution, expressed by the venom gland.

The protein resides in the secreted. In terms of biological role, postsynaptic neurotoxin. This is U4-theraphotoxin-Hhn1v from Cyriopagopus hainanus (Chinese bird spider).